The chain runs to 301 residues: Mas-related G-protein coupled receptor member A6 (301 aa).

Residues 1 to 15 (MHRSISIRILITNLM) lie on the Extracellular side of the membrane. A helical transmembrane segment spans residues 16–36 (IVILGLVGLTGNAIVFWLLLF). At 37-42 (RLRRNA) the chain is on the cytoplasmic side. The chain crosses the membrane as a helical span at residues 43 to 63 (FSIYILNLALADFLFLLCHII). Topologically, residues 64–77 (ASTEHILTFSSPNS) are extracellular. The helical transmembrane segment at 78 to 98 (IFINCLYTFRVLLYIAGLNML) threads the bilayer. The Cytoplasmic portion of the chain corresponds to 99 to 128 (SAISIERCLSVMCPIWYRCHRPEHTSTVMC). A helical transmembrane segment spans residues 129–149 (AMIWVLSLLLCILYRYFCGFL). Residues 150–163 (DTKYEDDYGCLAMN) are Extracellular-facing. The chain crosses the membrane as a helical span at residues 164–184 (FLTTAYLMFLFVVLCVSSLAL). At 185–203 (LARLFCGAGRMKLTRLYVT) the chain is on the cytoplasmic side. A helical membrane pass occupies residues 204 to 224 (ITLTLLVFLLCGLPCGFYWFL). Residues 225–240 (LSKIKNVFSVFEFSLY) are Extracellular-facing. The chain crosses the membrane as a helical span at residues 241–261 (LTSVVLTAINSCANPIIYFFV). The Cytoplasmic segment spans residues 262–301 (GSFRHRLKHQTLKMVLQSALQDTPETPENMVEMSRNKAEL).

It belongs to the G-protein coupled receptor 1 family. Mas subfamily. Expressed in a subset of sensory neurons that includes nociceptors. Expressed in the subclass of non-peptidergic sensory neurons that are IB4(+) and VR1(-).

The protein resides in the cell membrane. Orphan receptor. May be a receptor for RFamide-family neuropeptides such as NPFF and NPAF, which are analgesic in vivo. May regulate nociceptor function and/or development, including the sensation or modulation of pain. The polypeptide is Mas-related G-protein coupled receptor member A6 (Mrgpra6) (Mus musculus (Mouse)).